An 88-amino-acid chain; its full sequence is C-C motif chemokine 18 (88 aa).

Positions 1–19 (MKGLAAALLVLCTVALCSC) are cleaved as a signal peptide. 2 disulfides stabilise this stretch: C29–C53 and C30–C69.

Belongs to the intercrine beta (chemokine CC) family. The Cys-29/Cys-53 disulfide bond is required for activity.

It is found in the secreted. In terms of biological role, chemotactic factor that attracts lymphocytes but not monocytes or granulocytes. May be involved in B-cell migration into B-cell follicles in lymph nodes. Attracts naive T-lymphocytes toward dendritic cells and activated macrophages in lymph nodes, has chemotactic activity for naive T-cells, CD4+ and CD8+ T-cells and thus may play a role in both humoral and cell-mediated immunity responses. This chain is C-C motif chemokine 18 (CCL18), found in Macaca mulatta (Rhesus macaque).